The primary structure comprises 645 residues: 1,4-alpha-glucan branching enzyme GlgB (645 aa).

The Nucleophile role is filled by D309. E352 acts as the Proton donor in catalysis. Residues 619 to 645 (VKTRKGSKKQDGSKTKVRSNVTSRGKR) form a disordered region. Positions 636–645 (RSNVTSRGKR) are enriched in polar residues.

It belongs to the glycosyl hydrolase 13 family. GlgB subfamily. In terms of assembly, monomer.

It carries out the reaction Transfers a segment of a (1-&gt;4)-alpha-D-glucan chain to a primary hydroxy group in a similar glucan chain.. The protein operates within glycan biosynthesis; glycogen biosynthesis. Functionally, catalyzes the formation of the alpha-1,6-glucosidic linkages in glycogen by scission of a 1,4-alpha-linked oligosaccharide from growing alpha-1,4-glucan chains and the subsequent attachment of the oligosaccharide to the alpha-1,6 position. The chain is 1,4-alpha-glucan branching enzyme GlgB from Bacillus cereus (strain AH820).